Consider the following 419-residue polypeptide: Serine--tRNA ligase (419 aa).

Position 226 to 228 (226 to 228 (TSE)) interacts with L-serine. Residues 257–259 (RRE) and Val-273 each bind ATP. Residue Glu-280 participates in L-serine binding. 344–347 (ELTS) contributes to the ATP binding site. Thr-379 lines the L-serine pocket.

This sequence belongs to the class-II aminoacyl-tRNA synthetase family. Type-1 seryl-tRNA synthetase subfamily. In terms of assembly, homodimer. The tRNA molecule binds across the dimer.

Its subcellular location is the cytoplasm. The enzyme catalyses tRNA(Ser) + L-serine + ATP = L-seryl-tRNA(Ser) + AMP + diphosphate + H(+). The catalysed reaction is tRNA(Sec) + L-serine + ATP = L-seryl-tRNA(Sec) + AMP + diphosphate + H(+). The protein operates within aminoacyl-tRNA biosynthesis; selenocysteinyl-tRNA(Sec) biosynthesis; L-seryl-tRNA(Sec) from L-serine and tRNA(Sec): step 1/1. Functionally, catalyzes the attachment of serine to tRNA(Ser). Is also able to aminoacylate tRNA(Sec) with serine, to form the misacylated tRNA L-seryl-tRNA(Sec), which will be further converted into selenocysteinyl-tRNA(Sec). The sequence is that of Serine--tRNA ligase from Mycobacterium tuberculosis (strain CDC 1551 / Oshkosh).